The following is a 539-amino-acid chain: GMP synthase [glutamine-hydrolyzing] (539 aa).

The Glutamine amidotransferase type-1 domain occupies 4-202 (KILILDFGSQ…VLQIAGAKPD (199 aa)). Cys81 (nucleophile) is an active-site residue. Active-site residues include His176 and Glu178. Positions 203-395 (WIMSNHIEEA…LGLPPEMVYR (193 aa)) constitute a GMPS ATP-PPase domain. 230–236 (SGGVDSS) is a binding site for ATP.

As to quaternary structure, homodimer.

The catalysed reaction is XMP + L-glutamine + ATP + H2O = GMP + L-glutamate + AMP + diphosphate + 2 H(+). The protein operates within purine metabolism; GMP biosynthesis; GMP from XMP (L-Gln route): step 1/1. Its function is as follows. Catalyzes the synthesis of GMP from XMP. The polypeptide is GMP synthase [glutamine-hydrolyzing] (Burkholderia ambifaria (strain ATCC BAA-244 / DSM 16087 / CCUG 44356 / LMG 19182 / AMMD) (Burkholderia cepacia (strain AMMD))).